Here is a 155-residue protein sequence, read N- to C-terminus: Myelin basic protein (155 aa).

Disordered stretches follow at residues 1-70 (MASA…GRQT) and 109-155 (TDGQ…PARR). At Ala-2 the chain carries N-acetylalanine. Composition is skewed to basic and acidic residues over residues 37-49 (GSRK…KEPA) and 123-134 (KSKEAYRGRRDG).

The protein belongs to the myelin basic protein family.

The protein resides in the myelin membrane. In terms of biological role, this protein may function to maintain proper structure of myelin. This Heterodontus francisci (Horn shark) protein is Myelin basic protein (MBP).